Consider the following 485-residue polypeptide: D-alanine--D-alanyl carrier protein ligase (485 aa).

Threonine 144–serine 145 serves as a coordination point for ATP. Residue aspartate 189 coordinates D-alanine. Asparagine 284 to threonine 289 provides a ligand contact to ATP. Valine 293 serves as a coordination point for D-alanine. Residues aspartate 365 and lysine 473 each coordinate ATP. Lysine 473 lines the D-alanine pocket.

Belongs to the ATP-dependent AMP-binding enzyme family. DltA subfamily.

The protein resides in the cytoplasm. The catalysed reaction is holo-[D-alanyl-carrier protein] + D-alanine + ATP = D-alanyl-[D-alanyl-carrier protein] + AMP + diphosphate. Its pathway is cell wall biogenesis; lipoteichoic acid biosynthesis. Its function is as follows. Catalyzes the first step in the D-alanylation of lipoteichoic acid (LTA), the activation of D-alanine and its transfer onto the D-alanyl carrier protein (Dcp) DltC. In an ATP-dependent two-step reaction, forms a high energy D-alanyl-AMP intermediate, followed by transfer of the D-alanyl residue as a thiol ester to the phosphopantheinyl prosthetic group of the Dcp. D-alanylation of LTA plays an important role in modulating the properties of the cell wall in Gram-positive bacteria, influencing the net charge of the cell wall. This is D-alanine--D-alanyl carrier protein ligase from Staphylococcus aureus (strain USA300).